Here is a 392-residue protein sequence, read N- to C-terminus: uncharacterized protein (392 aa).

A mitochondrion-targeting transit peptide spans 1–34 (MCISSSSLLCGINSLKYASNRVGILIPPFQTASS). 8 consecutive transmembrane segments (helical) span residues 115 to 135 (VAIM…WHWD), 150 to 172 (FRFM…WWTL), 185 to 205 (LLVN…KFGV), 208 to 225 (ALSV…VALQ), 277 to 297 (ATFV…AVYA), 299 to 319 (AAIF…VYPV), 321 to 341 (AGIF…LNYE), and 350 to 370 (AHVS…PAMW). The active-site Nucleophile is the Ser292. His351 is an active-site residue.

It belongs to the peptidase S54 family.

The protein localises to the mitochondrion inner membrane. This is an uncharacterized protein from Schizosaccharomyces pombe (strain 972 / ATCC 24843) (Fission yeast).